Here is a 731-residue protein sequence, read N- to C-terminus: Polyadenylate-binding protein, cytoplasmic and nuclear (731 aa).

A compositionally biased stretch (polar residues) spans 1–10; that stretch reads MSADVSTTPA. The segment at 1 to 51 is disordered; it reads MSADVSTTPAAENVNGAAEASPAPAAAAPSATTPEVTAVENSTPAPAANQP. The span at 17–39 shows a compositional bias: low complexity; the sequence is AAEASPAPAAAAPSATTPEVTAV. 4 consecutive RRM domains span residues 54-132, 142-219, 235-312, and 338-472; these read ASLY…WSQR, GNVF…HHIS, TNVY…RAQK, and VNLY…LAQR. Disordered regions lie at residues 369–429 and 603–665; these read VMRD…SDKK and GGRG…NAQT. Residues 616–627 show a composition bias toward gly residues; sequence GMRGGPGYGQGR. The segment covering 645–656 has biased composition (low complexity); that stretch reads QNAAAPAGPQEG. The PABC domain maps to 658–731; the sequence is AGGVNAQTLG…MRPLAFTMST (74 aa).

It belongs to the polyadenylate-binding protein type-1 family.

The protein localises to the cytoplasm. It localises to the nucleus. Its function is as follows. Binds the poly(A) tail of mRNA. Appears to be an important mediator of the multiple roles of the poly(A) tail in mRNA biogenesis, stability and translation. In the nucleus, involved in both mRNA cleavage and polyadenylation. Is also required for efficient mRNA export to the cytoplasm. Acts in concert with a poly(A)-specific nuclease (PAN) to affect poly(A) tail shortening, which may occur concomitantly with either nucleocytoplasmic mRNA transport or translational initiation. In the cytoplasm, stimulates translation initiation and regulates mRNA decay through translation termination-coupled poly(A) shortening, probably mediated by PAN. This Aspergillus niger (strain ATCC MYA-4892 / CBS 513.88 / FGSC A1513) protein is Polyadenylate-binding protein, cytoplasmic and nuclear (pab1).